The primary structure comprises 334 residues: Kihadalactone A synthase LFS (334 aa).

The Fe2OG dioxygenase domain occupies 181–286 (KTASYSNMFH…RYSTGLFLCP (106 aa)). Residues His208, Asp210, and His269 each contribute to the Fe cation site. Arg277 contributes to the 2-oxoglutarate binding site.

Belongs to the iron/ascorbate-dependent oxidoreductase family. Fe(2+) serves as cofactor. As to expression, expressed in maturing fruits and in juice vesicles.

The catalysed reaction is (1R,2R,3S,8R,10R,11R,15S,16S)-3-(acetyloxy)-15-(1-hydroxy-4-oxobutan-2-yl)-2,7,7,11,16-pentamethyl-5-oxo-6-oxatetracyclo[9.7.0.0(2,8).0(12,16)]octadec-12-en-10-yl acetate + 2-oxoglutarate + O2 = kihadalactone A + succinate + CO2 + 2 H2O. It participates in secondary metabolite biosynthesis; terpenoid biosynthesis. 2-oxoglutarate-Fe(II) type oxidoreductase involved in the biosynthesis of limonoids triterpene natural products such as limonin, a compound with insecticidal activity responsible for the bitter taste in citrus. Catalyzes the formation of kihadalactone A. This Citrus sinensis (Sweet orange) protein is Kihadalactone A synthase LFS.